Reading from the N-terminus, the 804-residue chain is MNYSHNEIEKKWQDYWEANKTFKTSDNLGQKKFYALDMFPYPSGAGLHVGHPEGYTATDIISRYKRMLGYNVLHPMGWDAFGLPAEQYALDTGNDPREFTKENIQTFKRQIKELGFSYDWDREVNTTDPEYYKWTQWIFIQLYNKGLAYVDEVAVNWCPALGTVLSNEEVIDGVSERGGHPVYRRPMKQWVLKITEYADRLLEDLDELDWPESLKDMQRNWIGRSEGASVAFDVKDYNEQIEVFTTRPDTIYGASFLVLSPEHELVDLITTEDNKDDVEAYQKEAAKKSDLERTGLSKEKSGVFTGAYAVNPLSGQQVPIWIADYVLSTYGTGAVMAVPSGDQRDYEFAKTFDLPIIEVIEGGDMSKEAYTGDGPHINSGELNGLYNEAAIEKAIELLENKNAGTRKVNYKLRDWLFSRQRYWGEPIPVIHWEDGSMTTVPEDELPLLLPETDEIKPSGTGESPLANIDEFVNVVDEATGMKGRRETNTMPQWAGSCWYYLRYIDPDNEQMLADPEKLKHWLPVDLYIGGVEHAVLHLLYARFWHKVLFDLGVVPTKEPFQKLFNQGMILGEGNEKMSKSKGNVINPDDIVKSHGADTLRLYEMFMGPLDAAIAWSENGLDGSRRFLDRIWRLLITEDGSISNKVVNNHSKALDKSYHQTVKKVTEDYNSLNFNTAISQLMVFINDCYKAEEIYKPYIEGFIKMLAPIAPHISEELWSRLGHDETITYQPWPSYDEALLVDDEIEIVVQVNGKVRAKINVSKDIAKEEMEQIALDNEHVKSEIEGKDIKKVIAVPKKLVNIVAK.

Residues 40–51 carry the 'HIGH' region motif; that stretch reads PYPSGAGLHVGH. The 'KMSKS' region signature appears at 576-580; sequence KMSKS. Lys579 lines the ATP pocket.

Belongs to the class-I aminoacyl-tRNA synthetase family.

The protein resides in the cytoplasm. It carries out the reaction tRNA(Leu) + L-leucine + ATP = L-leucyl-tRNA(Leu) + AMP + diphosphate. The protein is Leucine--tRNA ligase of Staphylococcus saprophyticus subsp. saprophyticus (strain ATCC 15305 / DSM 20229 / NCIMB 8711 / NCTC 7292 / S-41).